The chain runs to 994 residues: E3 ubiquitin-protein ligase Arkadia (994 aa).

Glycyl lysine isopeptide (Lys-Gly) (interchain with G-Cter in SUMO2) cross-links involve residues K19, K28, K34, K47, K59, K73, K87, K96, and K110. The segment covering 66-89 has biased composition (basic and acidic residues); the sequence is HLCDDSQKQEKEMNGNQQEQEKSL. The tract at residues 66–106 is disordered; the sequence is HLCDDSQKQEKEMNGNQQEQEKSLVVRKKRKSQQAGPSYVQ. The disordered stretch occupies residues 120–191; that stretch reads QHLGTPSDED…HKWPRTETES (72 aa). The segment covering 132–151 has biased composition (low complexity); sequence SSFSDCLSSPSSSLHFGDSD. Residues 164–173 show a composition bias toward polar residues; that stretch reads RHSQTILNAK. K173 participates in a covalent cross-link: Glycyl lysine isopeptide (Lys-Gly) (interchain with G-Cter in SUMO2). Residues 174–184 are compositionally biased toward basic residues; that stretch reads SRSHSARSHKW. Glycyl lysine isopeptide (Lys-Gly) (interchain with G-Cter in SUMO2) cross-links involve residues K198 and K218. Residues 212–277 are disordered; that stretch reads CRKRFVKNNS…SSSTEGEEDL (66 aa). Over residues 234–247 the composition is skewed to basic residues; that stretch reads MQRKKREVLARRKY. The segment at 241–404 is interaction with AXIN1; the sequence is VLARRKYALL…VPTTSARMES (164 aa). The segment covering 252 to 271 has biased composition (low complexity); that stretch reads SSSSSSENDLSSESSSSSST. The SUMO interaction motif 1 (SIM) signature appears at 300 to 304; the sequence is VVVIE. The short motif at 325 to 331 is the SUMO interaction motif 2 (SIM) element; that stretch reads EVEIVTV. Positions 337-371 are disordered; the sequence is SRSTLGHSRSHWSQGSSSHASRPQEPRNRSRISTV. The span at 347 to 357 shows a compositional bias: low complexity; the sequence is HWSQGSSSHAS. The short motif at 382–386 is the SUMO interaction motif 3 (SIM) element; that stretch reads VVDLT. 4 disordered regions span residues 388-476, 508-537, 610-684, and 696-742; these read DEDE…AMPR, HGHHFQHHHHHHHTPHPAVPVSPSFSDPAC, APSQ…VDYV, and ISSH…APPA. The span at 395–467 shows a compositional bias: polar residues; the sequence is VPTTSARMES…SRRTTSSAVT (73 aa). Residues 508–522 show a composition bias toward basic residues; sequence HGHHFQHHHHHHHTP. The segment covering 670–680 has biased composition (pro residues); that stretch reads NPPPQTQPPPQ. The segment at 907–909 is ubiquitin binding; sequence YPH. Glycyl lysine isopeptide (Lys-Gly) (interchain with G-Cter in SUMO2) cross-links involve residues K923 and K927. 2 residues coordinate Zn(2+): C942 and C945. The RING-type; atypical zinc finger occupies 942 to 983; the sequence is CTICLSILEEGEDVRRLPCMHLFHQVCVDQWLITNKKCPICR. Residues 957–961 are ubiquitin binding; that stretch reads RLPCM. Zn(2+) contacts are provided by H965 and C968.

This sequence belongs to the Arkadia family. In terms of assembly, monomer. Interacts with SMAD6, SMAD7, AXIN1, AXIN2 and SKIL isoform SNON. Interacts with (phosphorylated) SMAD2 and SMAD3. Part of a complex containing RNF111, AXIN1 and SMAD7. Interacts (via SIM domains) with SUMO1 and SUMO2. Broadly expressed.

Its subcellular location is the nucleus. The protein resides in the cytoplasm. It is found in the PML body. The enzyme catalyses S-ubiquitinyl-[E2 ubiquitin-conjugating enzyme]-L-cysteine + [acceptor protein]-L-lysine = [E2 ubiquitin-conjugating enzyme]-L-cysteine + N(6)-ubiquitinyl-[acceptor protein]-L-lysine.. It participates in protein modification; protein ubiquitination. With respect to regulation, binds free ubiquitin non-covalently via its RING-type zinc finger. Ubiquitin-binding leads to enhance the E3 ubiquitin-protein ligase activity by stabilizing the ubiquitin-conjugating enzyme E2 (donor ubiquitin) in the 'closed' conformation and activating ubiquitin transfer. In terms of biological role, E3 ubiquitin-protein ligase. Required for mesoderm patterning during embryonic development. Acts as an enhancer of the transcriptional responses of the SMAD2/SMAD3 effectors, which are activated downstream of BMP. Acts by mediating ubiquitination and degradation of SMAD inhibitors such as SMAD7, inducing their proteasomal degradation and thereby enhancing the transcriptional activity of TGF-beta and BMP. In addition to enhance transcription of SMAD2/SMAD3 effectors, also regulates their turnover by mediating their ubiquitination and subsequent degradation, coupling their activation with degradation, thereby ensuring that only effectors 'in use' are degraded. Activates SMAD3/SMAD4-dependent transcription by triggering signal-induced degradation of SNON isoform of SKIL. Associates with UBE2D2 as an E2 enzyme. Specifically binds polysumoylated chains via SUMO interaction motifs (SIMs) and mediates ubiquitination of sumoylated substrates. Catalyzes 'Lys-63'-linked ubiquitination of sumoylated XPC in response to UV irradiation, promoting nucleotide excision repair. Mediates ubiquitination and degradation of sumoylated PML. The regulation of the BMP-SMAD signaling is however independent of sumoylation and is not dependent of SUMO interaction motifs (SIMs). The chain is E3 ubiquitin-protein ligase Arkadia from Homo sapiens (Human).